The primary structure comprises 487 residues: MAEIRKLKNYINGEWVESKTDQYEDVINPATKEVMCQVPISTREDVEYAVRSASEAFQTWSKTAVPRRARILFNYQQLLQQNKEELARLITLENGKNTTEALGEVGRGIENVEFAAGAPSLMMGDSLASIATDVEAANYRYPIGVVGGIAPFNFPMMVPCWMFPMAISLGNTFILKPSERTPLLTEKLAELFEQAGLPKGVFNVVHGAHDVVNGVLEHPDIKAISFVGSKPVGEYVFKKGSEHLKRVQALTGAKNHTIVLNDAHLEDTVTNIIGAAFGSAGERCMACAVVTVEEGIADEFMAKLQEKAADIKIGNGLDDGVFLGPVIREDNKKRTHSYIEKGIEEGARLLCDGRENATEDGYFVGPTIFDNVTTDMTIWKDEIFAPVLSVIRVKNLKEAVDIANQSEFANGACLFTSNANAIRYFRENIDAGMLGINLGVPAPMAFFPFSGWKSSFFGTLHANGKDSVDFYTRKKVVTARYPSPDFN.

The NAD(+) site is built by Ala-150, Phe-152, Lys-176, Glu-179, Arg-180, Ser-229, and Thr-251. The active-site Nucleophile is Cys-284. Glu-382 contacts NAD(+).

This sequence belongs to the aldehyde dehydrogenase family. IolA subfamily. As to quaternary structure, homotetramer.

It carries out the reaction 3-oxopropanoate + NAD(+) + CoA + H2O = hydrogencarbonate + acetyl-CoA + NADH + H(+). The enzyme catalyses 2-methyl-3-oxopropanoate + NAD(+) + CoA + H2O = propanoyl-CoA + hydrogencarbonate + NADH + H(+). It participates in polyol metabolism; myo-inositol degradation into acetyl-CoA; acetyl-CoA from myo-inositol: step 7/7. Catalyzes the oxidation of malonate semialdehyde (MSA) and methylmalonate semialdehyde (MMSA) into acetyl-CoA and propanoyl-CoA, respectively. Is involved in a myo-inositol catabolic pathway. Bicarbonate, and not CO2, is the end-product of the enzymatic reaction. The protein is Malonate-semialdehyde dehydrogenase of Bacillus velezensis (strain DSM 23117 / BGSC 10A6 / LMG 26770 / FZB42) (Bacillus amyloliquefaciens subsp. plantarum).